The chain runs to 983 residues: Polyhomeotic-like protein 3 (983 aa).

Disordered stretches follow at residues 1–34 (MDTE…MQQP), 103–149 (LSSG…SSTS), 225–283 (VLSS…TAVT), 313–332 (LHSP…QQQQ), 339–410 (LQNS…SQSP), 477–509 (PGQQ…STSP), and 601–620 (DECV…PAAI). 2 stretches are compositionally biased toward low complexity: residues 9 to 29 (TSSV…TSSS) and 103 to 126 (LSSG…SQTS). Residues 127–139 (INLSTSPTPAQLI) are compositionally biased toward polar residues. Residues 140–149 (SRSQASSSTS) are compositionally biased toward low complexity. The segment covering 225–257 (VLSSSQNGPPKSTSQTQSLTICHNKTTVTSSKI) has biased composition (polar residues). Positions 258–271 (SQRDPSPESNKKGE) are enriched in basic and acidic residues. Phosphoserine occurs at positions 263 and 272. The segment covering 274–283 (SLESRSTAVT) has biased composition (polar residues). The residue at position 315 (Ser315) is a Phosphoserine. Residues 365–383 (SNAQSQHCSPIQSHPSPLT) are compositionally biased toward polar residues. The span at 384–398 (VSPNQSQSAQQSVVV) shows a compositional bias: low complexity. The segment covering 477 to 489 (PGQQIVSPSHQQY) has biased composition (polar residues). Positions 490 to 506 (SSLQSSPIPIASPPQMS) are enriched in low complexity. Thr609 and Thr614 each carry phosphothreonine. Residue Ser616 is modified to Phosphoserine. Residues Lys691 and Lys732 each participate in a glycyl lysine isopeptide (Lys-Gly) (interchain with G-Cter in SUMO2) cross-link. The HD1 signature appears at 691-720 (KPPQAIVKPQILTHVIEGFVIQEGLEPFPV). 2 positions are modified to phosphoserine: Ser761 and Ser762. The segment at 776 to 810 (EEMDSELLKCEFCGKMGYANEFLRSKRFCTMSCAK) adopts an FCS-type zinc-finger fold. Residues Cys785, Cys788, Cys804, and Cys808 each coordinate Zn(2+). Lys810 participates in a covalent cross-link: Glycyl lysine isopeptide (Lys-Gly) (interchain with G-Cter in SUMO2). 2 disordered regions span residues 827 to 847 (RKPD…PDGA) and 864 to 889 (EEDL…SERE). The region spanning 919 to 983 (WTVDDVWAFI…CARINSLKES (65 aa)) is the SAM domain.

In terms of assembly, component of a PRC1-like complex.

Its subcellular location is the nucleus. Component of a Polycomb group (PcG) multiprotein PRC1-like complex, a complex class required to maintain the transcriptionally repressive state of many genes, including Hox genes, throughout development. PcG PRC1 complex acts via chromatin remodeling and modification of histones; it mediates monoubiquitination of histone H2A 'Lys-119', rendering chromatin heritably changed in its expressibility. This is Polyhomeotic-like protein 3 (PHC3) from Homo sapiens (Human).